A 460-amino-acid chain; its full sequence is Exodeoxyribonuclease 7 large subunit (460 aa).

It belongs to the XseA family. As to quaternary structure, heterooligomer composed of large and small subunits.

The protein localises to the cytoplasm. The enzyme catalyses Exonucleolytic cleavage in either 5'- to 3'- or 3'- to 5'-direction to yield nucleoside 5'-phosphates.. In terms of biological role, bidirectionally degrades single-stranded DNA into large acid-insoluble oligonucleotides, which are then degraded further into small acid-soluble oligonucleotides. The polypeptide is Exodeoxyribonuclease 7 large subunit (Edwardsiella ictaluri (strain 93-146)).